We begin with the raw amino-acid sequence, 362 residues long: Acetylajmalan esterase 2 (362 aa).

Positions 1–23 are cleaved as a signal peptide; that stretch reads MGFAARPFHIVFSLFVLAGATQA. The active-site Nucleophile is the S38. N-linked (GlcNAc...) asparagine glycans are attached at residues N100, N118, N151, and N202. Catalysis depends on residues D335 and H338.

The protein belongs to the 'GDSL' lipolytic enzyme family. As to expression, confined to roots.

The catalysed reaction is 17-O-acetylnorajmaline + H2O = norajmaline + acetate + H(+). The enzyme catalyses 17-O-acetylajmaline + H2O = ajmaline + acetate + H(+). It participates in alkaloid biosynthesis; ajmaline biosynthesis. In terms of biological role, acetylesterase involved in the biosynthesis of ajmaline-type monoterpenoid indole alkaloids (MIAs) natural products, important plant-derived pharmaceuticals used in the therapy of heart disorders. Deacetylates 17-O-acetylnorajmaline to produce norajmaline. May also catalyze the conversion of 17-O-acetylajmaline to ajmaline. The polypeptide is Acetylajmalan esterase 2 (Rauvolfia serpentina (Serpentine wood)).